We begin with the raw amino-acid sequence, 418 residues long: UDP-N-acetylglucosamine 1-carboxyvinyltransferase 2 (418 aa).

22 to 23 (KN) serves as a coordination point for phosphoenolpyruvate. Residue Arg-93 coordinates UDP-N-acetyl-alpha-D-glucosamine. Catalysis depends on Cys-117, which acts as the Proton donor. Cys-117 is modified (2-(S-cysteinyl)pyruvic acid O-phosphothioketal). UDP-N-acetyl-alpha-D-glucosamine-binding positions include 122–126 (RPIDQ), Asp-305, and Ile-327.

Belongs to the EPSP synthase family. MurA subfamily.

Its subcellular location is the cytoplasm. It carries out the reaction phosphoenolpyruvate + UDP-N-acetyl-alpha-D-glucosamine = UDP-N-acetyl-3-O-(1-carboxyvinyl)-alpha-D-glucosamine + phosphate. It functions in the pathway cell wall biogenesis; peptidoglycan biosynthesis. In terms of biological role, cell wall formation. Adds enolpyruvyl to UDP-N-acetylglucosamine. The protein is UDP-N-acetylglucosamine 1-carboxyvinyltransferase 2 of Clostridium acetobutylicum (strain ATCC 824 / DSM 792 / JCM 1419 / IAM 19013 / LMG 5710 / NBRC 13948 / NRRL B-527 / VKM B-1787 / 2291 / W).